A 276-amino-acid chain; its full sequence is MAIKKFKPTTNGRRNMTSLDFAEITTNRPEKSLTEKLSKKGGRNNQGRLTVRHQGGGHKRKYRIIDFKRNKDGVAGRVATIEYDPNRSANIALINYVDGEKRYILAPKGIKVGMEIMSGPEADIKVGNALPLVNIPVGTTIHNIELKPGKGGQLVRAAGASAQIQGRDGKYVIVRLQSGESRLFLGTCRATIGSVGNEEHELVNIGKAGRSRWLGKRPTVRGSVMNPVDHPHGGGEGRAPIGRSGPLTPWGKPALGLKTRKKNKSSDMYILRRRKK.

A compositionally biased stretch (basic and acidic residues) spans 28–38; sequence RPEKSLTEKLS. Disordered stretches follow at residues 28–57 and 219–276; these read RPEK…QGGG and TVRG…RRKK.

This sequence belongs to the universal ribosomal protein uL2 family. As to quaternary structure, part of the 50S ribosomal subunit. Forms a bridge to the 30S subunit in the 70S ribosome.

Functionally, one of the primary rRNA binding proteins. Required for association of the 30S and 50S subunits to form the 70S ribosome, for tRNA binding and peptide bond formation. It has been suggested to have peptidyltransferase activity; this is somewhat controversial. Makes several contacts with the 16S rRNA in the 70S ribosome. The protein is Large ribosomal subunit protein uL2 of Exiguobacterium sp. (strain ATCC BAA-1283 / AT1b).